Reading from the N-terminus, the 133-residue chain is Small ribosomal subunit protein bS6 (133 aa).

This sequence belongs to the bacterial ribosomal protein bS6 family.

Functionally, binds together with bS18 to 16S ribosomal RNA. The chain is Small ribosomal subunit protein bS6 from Borrelia turicatae (strain 91E135).